The primary structure comprises 111 residues: TPR repeat-containing protein associated with Hsp90 (111 aa).

Residue serine 2 is modified to N-acetylserine. 2 TPR repeats span residues 4-37 (FEKQKEQGNSLFKQGLYREAVHCYDQLITAQPQN) and 39-71 (VGYSNKAMALIKLGEYTQAIQMCQQGLRYTSTA).

As to quaternary structure, component of the R2TP complex composed at least of RVB1, RVB2, TAH1 and PIH1. Also interacts with HSP90.

Its subcellular location is the cytoplasm. The protein resides in the nucleus. This chain is TPR repeat-containing protein associated with Hsp90 (TAH1), found in Saccharomyces cerevisiae (strain ATCC 204508 / S288c) (Baker's yeast).